The following is a 175-amino-acid chain: MSILQMLYYPDQRLRKIARSVSIISHDTKKIISDMFETMYFQQGIGLAATQVDIHQKIIVIDLNNNIQKRLVFINPCIIKKIGTITHIIEGCLSIPKIRASVPRSQNIIVQSLDENGNNFEMEATDLLSVCIQHEIDHLLGKLFIDYLSPFKIQRIHKKINKWSTVYKNHIKLSH.

Cysteine 92 and histidine 134 together coordinate Fe cation. The active site involves glutamate 135. A Fe cation-binding site is contributed by histidine 138.

Belongs to the polypeptide deformylase family. The cofactor is Fe(2+).

It catalyses the reaction N-terminal N-formyl-L-methionyl-[peptide] + H2O = N-terminal L-methionyl-[peptide] + formate. Removes the formyl group from the N-terminal Met of newly synthesized proteins. Requires at least a dipeptide for an efficient rate of reaction. N-terminal L-methionine is a prerequisite for activity but the enzyme has broad specificity at other positions. This is Peptide deformylase from Blochmanniella floridana.